A 372-amino-acid polypeptide reads, in one-letter code: Dual-specificity RNA methyltransferase RlmN (372 aa).

The active-site Proton acceptor is the glutamate 94. Residues 100–339 (DGDRATLCVS…VTIRKTRGDD (240 aa)) enclose the Radical SAM core domain. An intrachain disulfide couples cysteine 107 to cysteine 344. 3 residues coordinate [4Fe-4S] cluster: cysteine 114, cysteine 118, and cysteine 121. S-adenosyl-L-methionine is bound by residues 168-169 (GE), serine 200, 222-224 (SLH), and asparagine 301. Cysteine 344 functions as the S-methylcysteine intermediate in the catalytic mechanism.

The protein belongs to the radical SAM superfamily. RlmN family. [4Fe-4S] cluster is required as a cofactor.

The protein resides in the cytoplasm. The enzyme catalyses adenosine(2503) in 23S rRNA + 2 reduced [2Fe-2S]-[ferredoxin] + 2 S-adenosyl-L-methionine = 2-methyladenosine(2503) in 23S rRNA + 5'-deoxyadenosine + L-methionine + 2 oxidized [2Fe-2S]-[ferredoxin] + S-adenosyl-L-homocysteine. It catalyses the reaction adenosine(37) in tRNA + 2 reduced [2Fe-2S]-[ferredoxin] + 2 S-adenosyl-L-methionine = 2-methyladenosine(37) in tRNA + 5'-deoxyadenosine + L-methionine + 2 oxidized [2Fe-2S]-[ferredoxin] + S-adenosyl-L-homocysteine. In terms of biological role, specifically methylates position 2 of adenine 2503 in 23S rRNA and position 2 of adenine 37 in tRNAs. m2A2503 modification seems to play a crucial role in the proofreading step occurring at the peptidyl transferase center and thus would serve to optimize ribosomal fidelity. This Aliivibrio fischeri (strain MJ11) (Vibrio fischeri) protein is Dual-specificity RNA methyltransferase RlmN.